Consider the following 375-residue polypeptide: Chaperone protein DnaJ (375 aa).

Positions 5-70 (DYYELLGISR…EKRAAYDQYG (66 aa)) constitute a J domain. Residues 132–210 (GTTKDIKIHT…CHGDGRVNKA (79 aa)) form a CR-type zinc finger. Residues C145, C148, C162, C165, C184, C187, C198, and C201 each coordinate Zn(2+). 4 CXXCXGXG motif repeats span residues 145–152 (CDTCHGTG), 162–169 (CPHCHGAG), 184–191 (CHFCHGTG), and 198–205 (CKTCHGDG).

The protein belongs to the DnaJ family. In terms of assembly, homodimer. The cofactor is Zn(2+).

Its subcellular location is the cytoplasm. Functionally, participates actively in the response to hyperosmotic and heat shock by preventing the aggregation of stress-denatured proteins and by disaggregating proteins, also in an autonomous, DnaK-independent fashion. Unfolded proteins bind initially to DnaJ; upon interaction with the DnaJ-bound protein, DnaK hydrolyzes its bound ATP, resulting in the formation of a stable complex. GrpE releases ADP from DnaK; ATP binding to DnaK triggers the release of the substrate protein, thus completing the reaction cycle. Several rounds of ATP-dependent interactions between DnaJ, DnaK and GrpE are required for fully efficient folding. Also involved, together with DnaK and GrpE, in the DNA replication of plasmids through activation of initiation proteins. The protein is Chaperone protein DnaJ of Aggregatibacter actinomycetemcomitans (Actinobacillus actinomycetemcomitans).